Here is a 238-residue protein sequence, read N- to C-terminus: Fatty acid metabolism regulator protein (238 aa).

Residues lysine 6 to phenylalanine 74 enclose the HTH gntR-type domain. A DNA-binding region (H-T-H motif) is located at residues glutamate 34 to glutamine 53.

As to quaternary structure, homodimer.

It is found in the cytoplasm. In terms of biological role, multifunctional regulator of fatty acid metabolism. This chain is Fatty acid metabolism regulator protein, found in Shewanella putrefaciens (strain CN-32 / ATCC BAA-453).